Consider the following 611-residue polypeptide: Aspartate--tRNA(Asp/Asn) ligase (611 aa).

Glu-177 contacts L-aspartate. Positions 201 to 204 are aspartate; the sequence is QLFK. Arg-223 contacts L-aspartate. Residues 223–225 and Gln-232 each bind ATP; that span reads RDE. L-aspartate is bound at residue His-461. Residue Glu-499 participates in ATP binding. Arg-506 contacts L-aspartate. ATP is bound at residue 551 to 554; the sequence is GVDR.

This sequence belongs to the class-II aminoacyl-tRNA synthetase family. Type 1 subfamily. Homodimer.

Its subcellular location is the cytoplasm. The catalysed reaction is tRNA(Asx) + L-aspartate + ATP = L-aspartyl-tRNA(Asx) + AMP + diphosphate. In terms of biological role, aspartyl-tRNA synthetase with relaxed tRNA specificity since it is able to aspartylate not only its cognate tRNA(Asp) but also tRNA(Asn). Reaction proceeds in two steps: L-aspartate is first activated by ATP to form Asp-AMP and then transferred to the acceptor end of tRNA(Asp/Asn). The chain is Aspartate--tRNA(Asp/Asn) ligase from Synechococcus sp. (strain WH7803).